The following is a 313-amino-acid chain: Beta-lactamase FAR-1 (313 aa).

Residues 1–28 form the signal peptide; sequence MPGVDISFLKKSGRRTMAAAAVIALLGG. Cys-29 is lipidated: N-palmitoyl cysteine. Cys-29 carries the S-diacylglycerol cysteine lipid modification. The Acyl-ester intermediate role is filled by Ser-94. Ser-154 provides a ligand contact to substrate. The Proton acceptor role is filled by Glu-190. 258 to 260 is a substrate binding site; sequence KTG.

Belongs to the class-A beta-lactamase family.

Its subcellular location is the cell membrane. The catalysed reaction is a beta-lactam + H2O = a substituted beta-amino acid. Inhibited by clavulanic acid, and at a low level by tazobactam and sulbactam. In terms of biological role, confers high levels of resistance to amoxicillin, benzylpenicillin, piperacillin, ticarcillin and cephalothin. Also hydrolyzes aztreonam at a low level. Not active against ceftazidime, cefotaxime and imipenem. This Nocardia farcinica (strain IFM 10152) protein is Beta-lactamase FAR-1 (bla).